The primary structure comprises 291 residues: 4-hydroxy-tetrahydrodipicolinate synthase (291 aa).

Thr44 lines the pyruvate pocket. Residue Tyr132 is the Proton donor/acceptor of the active site. Lys160 (schiff-base intermediate with substrate) is an active-site residue. Pyruvate is bound at residue Val202.

Belongs to the DapA family. Homotetramer; dimer of dimers.

It is found in the cytoplasm. It carries out the reaction L-aspartate 4-semialdehyde + pyruvate = (2S,4S)-4-hydroxy-2,3,4,5-tetrahydrodipicolinate + H2O + H(+). It participates in amino-acid biosynthesis; L-lysine biosynthesis via DAP pathway; (S)-tetrahydrodipicolinate from L-aspartate: step 3/4. Catalyzes the condensation of (S)-aspartate-beta-semialdehyde [(S)-ASA] and pyruvate to 4-hydroxy-tetrahydrodipicolinate (HTPA). The chain is 4-hydroxy-tetrahydrodipicolinate synthase from Clostridium perfringens (strain SM101 / Type A).